Here is a 162-residue protein sequence, read N- to C-terminus: Large ribosomal subunit protein uL15 (162 aa).

The interval 1–41 (MKLSDIADNAGSRKKRMRVGRGIGSGKGKTAGRGGKGQTAR) is disordered. Over residues 21–37 (RGIGSGKGKTAGRGGKG) the composition is skewed to gly residues.

It belongs to the universal ribosomal protein uL15 family. In terms of assembly, part of the 50S ribosomal subunit.

In terms of biological role, binds to the 23S rRNA. This is Large ribosomal subunit protein uL15 from Rhodopseudomonas palustris (strain BisB18).